The primary structure comprises 46 residues: RECRSESKKFVGLCVSDTNCASVCLTERFPGGKCDGYRRCFCTKDC.

4 disulfides stabilise this stretch: Cys-3–Cys-46, Cys-14–Cys-34, Cys-20–Cys-40, and Cys-24–Cys-42.

Functionally, plant defense peptide. The polypeptide is Defensin Tk-AMP-D5 (Triticum kiharae (Wheat)).